A 197-amino-acid polypeptide reads, in one-letter code: MHKKLYLASNSPRRWALLQNLGLALLPLASEIDETAHANEMAQDYCSRIAREKNQAAQAVRIRQNLAEYPILTADIMVSIDGEILGKPSHQQQAVEMLKKLSGRTHQVYTAVCVSANQQLFECIHSSEVTFKRLSEAEIYAYIATGEPMDKAGAYGIQALGGIFIQHLAGSFTGVMGLPIFETVALLKKVNIEVLPS.

Asp-75 (proton acceptor) is an active-site residue.

This sequence belongs to the Maf family. The cofactor is a divalent metal cation.

The protein resides in the cytoplasm. It catalyses the reaction a ribonucleoside 5'-triphosphate + H2O = a ribonucleoside 5'-phosphate + diphosphate + H(+). It carries out the reaction a 2'-deoxyribonucleoside 5'-triphosphate + H2O = a 2'-deoxyribonucleoside 5'-phosphate + diphosphate + H(+). In terms of biological role, nucleoside triphosphate pyrophosphatase. May have a dual role in cell division arrest and in preventing the incorporation of modified nucleotides into cellular nucleic acids. In Haemophilus ducreyi (strain 35000HP / ATCC 700724), this protein is Nucleoside triphosphate pyrophosphatase.